The sequence spans 397 residues: Iron-sulfur cluster assembly SufBD family protein Rv1462 (397 aa).

T2 is subject to N-acetylthreonine.

The protein belongs to the iron-sulfur cluster assembly SufBD family.

The protein is Iron-sulfur cluster assembly SufBD family protein Rv1462 of Mycobacterium tuberculosis (strain ATCC 25618 / H37Rv).